Reading from the N-terminus, the 514-residue chain is Probable type III restriction-modification enzyme HindVIP Res subunit (514 aa).

This sequence belongs to the type III restriction-modification system Res protein family. As to quaternary structure, contains two different subunits: Res and Mod. The cofactor is Mg(2+). It depends on S-adenosyl-L-methionine as a cofactor.

It catalyses the reaction Endonucleolytic cleavage of DNA to give specific double-stranded fragments with terminal 5'-phosphates.. A type III restriction enzyme that recognizes 2 inversely oriented double-stranded sequences 5'-CGAAT-3' and cleaves 25-27 base pairs downstream. After binding to one recognition site undergoes random one-dimensional diffusion along DNA until it collides with a stationary enzyme bound to the second DNA site, which is when DNA cleavage occurs. DNA restriction requires both the Res and Mod subunits. The protein is Probable type III restriction-modification enzyme HindVIP Res subunit of Haemophilus influenzae (strain ATCC 51907 / DSM 11121 / KW20 / Rd).